Reading from the N-terminus, the 272-residue chain is Shikimate dehydrogenase (NADP(+)) (272 aa).

Shikimate contacts are provided by residues 14 to 16 and T61; that span reads SKS. K65 acts as the Proton acceptor in catalysis. E77 is a binding site for NADP(+). Shikimate contacts are provided by N86 and D102. Residues 126–130, 149–154, and M213 contribute to the NADP(+) site; these read GAGGA and NRTVFR. Position 215 (Y215) interacts with shikimate. G237 is an NADP(+) binding site.

This sequence belongs to the shikimate dehydrogenase family. Homodimer.

It catalyses the reaction shikimate + NADP(+) = 3-dehydroshikimate + NADPH + H(+). It functions in the pathway metabolic intermediate biosynthesis; chorismate biosynthesis; chorismate from D-erythrose 4-phosphate and phosphoenolpyruvate: step 4/7. In terms of biological role, involved in the biosynthesis of the chorismate, which leads to the biosynthesis of aromatic amino acids. Catalyzes the reversible NADPH linked reduction of 3-dehydroshikimate (DHSA) to yield shikimate (SA). In Escherichia coli O127:H6 (strain E2348/69 / EPEC), this protein is Shikimate dehydrogenase (NADP(+)).